Reading from the N-terminus, the 233-residue chain is MPKHSKRYLEARKLVDRTKYYDLDEAIELVKKTATAKFDETIELHIQTGIDYRKPEQHIRGTIVLPHGTGKEVKVLVFAKGEKAKEALEAGADYVGAEDLVEKIEKEGFLDFDVAIATPDMMRIIGRLGKILGPRGLMPSPKSGTVTQEVAEAVKEFKKGRIEVRTDKTGNIHIPVGKRSFDNEKLKENIIAAIKQIMQMKPAGVKGQFIKKVVLASTMGPGIKLNLQSLLKE.

This sequence belongs to the universal ribosomal protein uL1 family. In terms of assembly, part of the 50S ribosomal subunit.

Functionally, binds directly to 23S rRNA. The L1 stalk is quite mobile in the ribosome, and is involved in E site tRNA release. Protein L1 is also a translational repressor protein, it controls the translation of the L11 operon by binding to its mRNA. This is Large ribosomal subunit protein uL1 from Thermotoga maritima (strain ATCC 43589 / DSM 3109 / JCM 10099 / NBRC 100826 / MSB8).